Consider the following 147-residue polypeptide: Leghemoglobin 8 (147 aa).

Positions 2–147 (GFTEKQESLV…LAASIKKSMS (146 aa)) constitute a Globin domain. Nitrated tyrosine occurs at positions 25 and 30. Ser45 provides a ligand contact to heme b. Residue Ser45 is modified to Phosphoserine. His62 contributes to the O2 binding site. Heme b is bound by residues Lys65, His94, and Lys97. A Nitrated tyrosine modification is found at Tyr135.

The protein belongs to the plant globin family. In terms of assembly, monomer. Interacts with CAS31 in the cytoplasm; this interaction leads to its protection from denaturation under thermal and drought stresses. Post-translationally, nitrated in effective nodules and particularly in hypoxic conditions; this mechanism may play a protective role in the symbiosis by buffering toxic peroxynitrite NO(2)(-). Nitration level decrease during nodule senescence. In terms of processing, phosphorylation at Ser-45 disrupts the molecular environment of its porphyrin ring oxygen binding pocket, thus leading to a reduced oxygen consumption and to the delivery of oxygen O(2) to symbiosomes. As to expression, root nodules.

The protein localises to the cytoplasm. It is found in the nucleus. In terms of biological role, leghemoglobin that reversibly binds oxygen O(2) through a pentacoordinated heme iron. In root nodules, facilitates the diffusion of oxygen to the bacteroids while preventing the bacterial nitrogenase from being inactivated by buffering dioxygen, nitric oxide and carbon monoxide, and promoting the formation of reactive oxygen species (ROS, e.g. H(2)O(2)). This role is essential for symbiotic nitrogen fixation (SNF). This Medicago truncatula (Barrel medic) protein is Leghemoglobin 8.